Here is a 269-residue protein sequence, read N- to C-terminus: Triosephosphate isomerase (269 aa).

8-10 (NWK) lines the substrate pocket. The Electrophile role is filled by His-105. Glu-183 serves as the catalytic Proton acceptor. Residues Gly-189, Ser-227, and 248–249 (GG) each bind substrate.

Belongs to the triosephosphate isomerase family. Homodimer.

Its subcellular location is the cytoplasm. The enzyme catalyses D-glyceraldehyde 3-phosphate = dihydroxyacetone phosphate. It participates in carbohydrate biosynthesis; gluconeogenesis. The protein operates within carbohydrate degradation; glycolysis; D-glyceraldehyde 3-phosphate from glycerone phosphate: step 1/1. Involved in the gluconeogenesis. Catalyzes stereospecifically the conversion of dihydroxyacetone phosphate (DHAP) to D-glyceraldehyde-3-phosphate (G3P). This is Triosephosphate isomerase from Psychrobacter arcticus (strain DSM 17307 / VKM B-2377 / 273-4).